Reading from the N-terminus, the 316-residue chain is Small ribosomal subunit biogenesis GTPase RsgA (316 aa).

The 166-residue stretch at 83–248 (DQYKSKLFAA…LIDSPGFQEF (166 aa)) folds into the CP-type G domain. GTP is bound by residues 131 to 134 (NKTD) and 185 to 193 (GQSGMGKST). 4 residues coordinate Zn(2+): C272, C277, H279, and C285.

It belongs to the TRAFAC class YlqF/YawG GTPase family. RsgA subfamily. As to quaternary structure, monomer. Associates with 30S ribosomal subunit, binds 16S rRNA. Requires Zn(2+) as cofactor.

The protein resides in the cytoplasm. In terms of biological role, one of several proteins that assist in the late maturation steps of the functional core of the 30S ribosomal subunit. Helps release RbfA from mature subunits. May play a role in the assembly of ribosomal proteins into the subunit. Circularly permuted GTPase that catalyzes slow GTP hydrolysis, GTPase activity is stimulated by the 30S ribosomal subunit. The polypeptide is Small ribosomal subunit biogenesis GTPase RsgA (Paraburkholderia phytofirmans (strain DSM 17436 / LMG 22146 / PsJN) (Burkholderia phytofirmans)).